The chain runs to 89 residues: Elongation factor 1-beta (89 aa).

Belongs to the EF-1-beta/EF-1-delta family.

Functionally, promotes the exchange of GDP for GTP in EF-1-alpha/GDP, thus allowing the regeneration of EF-1-alpha/GTP that could then be used to form the ternary complex EF-1-alpha/GTP/AAtRNA. This chain is Elongation factor 1-beta, found in Methanococcoides burtonii (strain DSM 6242 / NBRC 107633 / OCM 468 / ACE-M).